A 615-amino-acid polypeptide reads, in one-letter code: UvrABC system protein C (615 aa).

A GIY-YIG domain is found at 12-91 (EKPGVYIMKD…IKKYKPKYNV (80 aa)). The region spanning 203–238 (DWLIQKLKEDMKKAAEELRFEEAARIRDQIFAIERT) is the UVR domain.

This sequence belongs to the UvrC family. Interacts with UvrB in an incision complex.

The protein resides in the cytoplasm. The UvrABC repair system catalyzes the recognition and processing of DNA lesions. UvrC both incises the 5' and 3' sides of the lesion. The N-terminal half is responsible for the 3' incision and the C-terminal half is responsible for the 5' incision. This Thermoanaerobacter pseudethanolicus (strain ATCC 33223 / 39E) (Clostridium thermohydrosulfuricum) protein is UvrABC system protein C.